We begin with the raw amino-acid sequence, 63 residues long: Iota-crystallin (63 aa).

Belongs to the calycin superfamily. Fatty-acid binding protein (FABP) family.

Functionally, binds vitamin A2 in the eye lens and thus functions as a UV filter. Intracellular transport of retinol. The sequence is that of Iota-crystallin (CRBPI) from Gonatodes vittatus (Wiegmann's striped gecko).